A 520-amino-acid chain; its full sequence is Cholesterol side-chain cleavage enzyme, mitochondrial (520 aa).

A mitochondrion-targeting transit peptide spans 1–39 (MLARGLALRSVLVKGCQPFLSAPRECPGHPRVGTGEGAC). Cys-461 serves as a coordination point for heme.

It belongs to the cytochrome P450 family. In terms of assembly, interacts with FDX1/adrenodoxin. The cofactor is heme.

The protein localises to the mitochondrion inner membrane. The catalysed reaction is 6 reduced [adrenodoxin] + cholesterol + 3 O2 + 6 H(+) = 4-methylpentanal + pregnenolone + 6 oxidized [adrenodoxin] + 4 H2O. It carries out the reaction 2 reduced [adrenodoxin] + cholesterol + O2 + 2 H(+) = (22R)-hydroxycholesterol + 2 oxidized [adrenodoxin] + H2O. It catalyses the reaction (22R)-hydroxycholesterol + 2 reduced [adrenodoxin] + O2 + 2 H(+) = (20R,22R)-20,22-dihydroxycholesterol + 2 oxidized [adrenodoxin] + H2O. The enzyme catalyses (20R,22R)-20,22-dihydroxycholesterol + 2 reduced [adrenodoxin] + O2 + 2 H(+) = 4-methylpentanal + pregnenolone + 2 oxidized [adrenodoxin] + 2 H2O. Its pathway is lipid metabolism; C21-steroid hormone metabolism. The protein operates within steroid metabolism; cholesterol metabolism. A cytochrome P450 monooxygenase that catalyzes the side-chain hydroxylation and cleavage of cholesterol to pregnenolone, the precursor of most steroid hormones. Catalyzes three sequential oxidation reactions of cholesterol, namely the hydroxylation at C22 followed with the hydroxylation at C20 to yield 20R,22R-hydroxycholesterol that is further cleaved between C20 and C22 to yield the C21-steroid pregnenolone and 4-methylpentanal. Mechanistically, uses molecular oxygen inserting one oxygen atom into a substrate and reducing the second into a water molecule. Two electrons are provided by NADPH via a two-protein mitochondrial transfer system comprising flavoprotein FDXR (adrenodoxin/ferredoxin reductase) and nonheme iron-sulfur protein FDX1 or FDX2 (adrenodoxin/ferredoxin). The protein is Cholesterol side-chain cleavage enzyme, mitochondrial (CYP11A1) of Sus scrofa (Pig).